The chain runs to 134 residues: Arginine decarboxylase proenzyme (134 aa).

Ser-82 serves as the catalytic Schiff-base intermediate with substrate; via pyruvic acid. A Pyruvic acid (Ser); by autocatalysis modification is found at Ser-82. His-87 (proton acceptor; for processing activity) is an active-site residue. Cys-102 acts as the Proton donor; for catalytic activity in catalysis.

This sequence belongs to the prokaryotic AdoMetDC family. Type 1 subfamily. As to quaternary structure, heterooctamer of four alpha and four beta chains arranged as a tetramer of alpha/beta heterodimers. Requires pyruvate as cofactor. In terms of processing, is synthesized initially as an inactive proenzyme. Formation of the active enzyme involves a self-maturation process in which the active site pyruvoyl group is generated from an internal serine residue via an autocatalytic post-translational modification. Two non-identical subunits are generated from the proenzyme in this reaction, and the pyruvate is formed at the N-terminus of the alpha chain, which is derived from the carboxyl end of the proenzyme. The post-translation cleavage follows an unusual pathway, termed non-hydrolytic serinolysis, in which the side chain hydroxyl group of the serine supplies its oxygen atom to form the C-terminus of the beta chain, while the remainder of the serine residue undergoes an oxidative deamination to produce ammonia and the pyruvoyl group blocking the N-terminus of the alpha chain.

The enzyme catalyses L-arginine + H(+) = agmatine + CO2. The protein operates within amine and polyamine biosynthesis; agmatine biosynthesis; agmatine from L-arginine: step 1/1. In terms of biological role, specifically catalyzes the decarboxylation of L-arginine to agmatine. Has no S-adenosylmethionine decarboxylase (AdoMetDC) activity. This chain is Arginine decarboxylase proenzyme, found in Saccharolobus islandicus (strain M.16.4 / Kamchatka #3) (Sulfolobus islandicus).